We begin with the raw amino-acid sequence, 419 residues long: Histidine--tRNA ligase (419 aa).

Belongs to the class-II aminoacyl-tRNA synthetase family. In terms of assembly, homodimer.

The protein localises to the cytoplasm. It carries out the reaction tRNA(His) + L-histidine + ATP = L-histidyl-tRNA(His) + AMP + diphosphate + H(+). The protein is Histidine--tRNA ligase of Methylobacillus flagellatus (strain ATCC 51484 / DSM 6875 / VKM B-1610 / KT).